The sequence spans 604 residues: Threonine--tRNA ligase (604 aa).

A catalytic region spans residues 210 to 501 (DHRKIGTEME…LTEHYAGEFP (292 aa)). 3 residues coordinate Zn(2+): Cys-302, His-353, and His-478.

The protein belongs to the class-II aminoacyl-tRNA synthetase family. As to quaternary structure, homodimer. It depends on Zn(2+) as a cofactor.

The protein localises to the cytoplasm. The enzyme catalyses tRNA(Thr) + L-threonine + ATP = L-threonyl-tRNA(Thr) + AMP + diphosphate + H(+). In terms of biological role, catalyzes the attachment of threonine to tRNA(Thr) in a two-step reaction: L-threonine is first activated by ATP to form Thr-AMP and then transferred to the acceptor end of tRNA(Thr). Also edits incorrectly charged L-seryl-tRNA(Thr). This chain is Threonine--tRNA ligase, found in Sulfurovum sp. (strain NBC37-1).